We begin with the raw amino-acid sequence, 350 residues long: UDP-N-acetylenolpyruvoylglucosamine reductase (350 aa).

The FAD-binding PCMH-type domain occupies 24 to 195 (HVEATARWLL…VAVEFNLPLL (172 aa)). Arg172 is an active-site residue. Ser245 (proton donor) is an active-site residue. Residue Glu342 is part of the active site.

This sequence belongs to the MurB family. It depends on FAD as a cofactor.

The protein localises to the cytoplasm. It catalyses the reaction UDP-N-acetyl-alpha-D-muramate + NADP(+) = UDP-N-acetyl-3-O-(1-carboxyvinyl)-alpha-D-glucosamine + NADPH + H(+). It functions in the pathway cell wall biogenesis; peptidoglycan biosynthesis. In terms of biological role, cell wall formation. This chain is UDP-N-acetylenolpyruvoylglucosamine reductase, found in Xanthomonas axonopodis pv. citri (strain 306).